The sequence spans 284 residues: Fructosamine kinase FrlD (284 aa).

The protein belongs to the carbohydrate kinase PfkB family.

In terms of biological role, catalyzes the phosphorylation of a range of fructosamines to fructosamine 6-phosphates. This is Fructosamine kinase FrlD (frlD) from Bacillus subtilis (strain 168).